The sequence spans 260 residues: Acetylglutamate kinase (260 aa).

Residues 46–47 (GG), arginine 68, and asparagine 160 each bind substrate.

This sequence belongs to the acetylglutamate kinase family. ArgB subfamily.

The protein localises to the cytoplasm. It catalyses the reaction N-acetyl-L-glutamate + ATP = N-acetyl-L-glutamyl 5-phosphate + ADP. It functions in the pathway amino-acid biosynthesis; L-arginine biosynthesis; N(2)-acetyl-L-ornithine from L-glutamate: step 2/4. Its function is as follows. Catalyzes the ATP-dependent phosphorylation of N-acetyl-L-glutamate. This is Acetylglutamate kinase from Shewanella sp. (strain MR-4).